A 393-amino-acid chain; its full sequence is SH3 domain-binding protein 5-like (393 aa).

2 disordered regions span residues 1–59 and 272–332; these read MAEL…LDPR and HARR…DTDT. A Phosphothreonine modification is found at Thr-13. The segment covering 18–28 has biased composition (basic and acidic residues); sequence LRPEVVEDEVP. Phosphoserine occurs at positions 30 and 49. Coiled-coil stretches lie at residues 59–140 and 169–272; these read RIQE…YERA and WQEM…EQIH. A compositionally biased stretch (gly residues) spans 304-313; sequence GDSGIEGAEG. The span at 317 to 332 shows a compositional bias: low complexity; it reads EEGSSLGPGPAPDTDT. Residues Ser-343, Ser-350, Ser-358, Ser-362, and Ser-378 each carry the phosphoserine modification. The tract at residues 364 to 393 is disordered; sequence DGQELGTRSGGRRGSDGGVRGGRHQRSVSL. The span at 384–393 shows a compositional bias: basic residues; the sequence is GGRHQRSVSL.

The protein belongs to the SH3BP5 family.

In terms of biological role, functions as a guanine nucleotide exchange factor (GEF) for RAB11A. The sequence is that of SH3 domain-binding protein 5-like (SH3BP5L) from Pongo abelii (Sumatran orangutan).